The chain runs to 154 residues: Endoribonuclease YbeY (154 aa).

Zn(2+) is bound by residues histidine 113, histidine 117, and histidine 123.

It belongs to the endoribonuclease YbeY family. It depends on Zn(2+) as a cofactor.

The protein resides in the cytoplasm. Functionally, single strand-specific metallo-endoribonuclease involved in late-stage 70S ribosome quality control and in maturation of the 3' terminus of the 16S rRNA. In Vibrio vulnificus (strain CMCP6), this protein is Endoribonuclease YbeY.